The sequence spans 140 residues: ATP synthase epsilon chain (140 aa).

Belongs to the ATPase epsilon chain family. As to quaternary structure, F-type ATPases have 2 components, CF(1) - the catalytic core - and CF(0) - the membrane proton channel. CF(1) has five subunits: alpha(3), beta(3), gamma(1), delta(1), epsilon(1). CF(0) has three main subunits: a, b and c.

The protein localises to the cell membrane. In terms of biological role, produces ATP from ADP in the presence of a proton gradient across the membrane. The protein is ATP synthase epsilon chain of Baumannia cicadellinicola subsp. Homalodisca coagulata.